The following is a 396-amino-acid chain: S-adenosylmethionine synthase (396 aa).

His-16 serves as a coordination point for ATP. Residue Asp-18 coordinates Mg(2+). Position 44 (Glu-44) interacts with K(+). L-methionine-binding residues include Glu-57 and Gln-100. The tract at residues 100-110 is flexible loop; that stretch reads QSVDINQGVDR. ATP is bound by residues 165-167, Asp-240, 246-247, Ala-263, and Lys-267; these read DAK and RK. Asp-240 provides a ligand contact to L-methionine. Lys-271 is a binding site for L-methionine.

This sequence belongs to the AdoMet synthase family. In terms of assembly, homotetramer; dimer of dimers. The cofactor is Mg(2+). K(+) is required as a cofactor.

The protein localises to the cytoplasm. It carries out the reaction L-methionine + ATP + H2O = S-adenosyl-L-methionine + phosphate + diphosphate. The protein operates within amino-acid biosynthesis; S-adenosyl-L-methionine biosynthesis; S-adenosyl-L-methionine from L-methionine: step 1/1. Functionally, catalyzes the formation of S-adenosylmethionine (AdoMet) from methionine and ATP. The overall synthetic reaction is composed of two sequential steps, AdoMet formation and the subsequent tripolyphosphate hydrolysis which occurs prior to release of AdoMet from the enzyme. The sequence is that of S-adenosylmethionine synthase from Pseudomonas aeruginosa (strain UCBPP-PA14).